A 41-amino-acid polypeptide reads, in one-letter code: Large ribosomal subunit protein bL36 (41 aa).

Belongs to the bacterial ribosomal protein bL36 family.

The sequence is that of Large ribosomal subunit protein bL36 from Rhodopseudomonas palustris (strain BisB5).